Here is a 239-residue protein sequence, read N- to C-terminus: MKRGVVLFSGGLDSTACLYWAKRHYDEVIMLTINYGSREESVMNKVAEFFSKELKIPLKIIRVNFLNEFSKLSGSALVEGNVPRVSASELEVIERAKETARSVWVPARNLVLISIAASLLDALGGGDIIVGFNKEEGETFPDNTKEFVERVNKALEYATMNKVRVVAPLIELDKRGIARLLKELGAKYEYSNSCYDPKGFTEDGKPIHCGRCESCVRRHRGLMEGIGEDKTVYLVTPKL.

8-18 is an ATP binding site; that stretch reads FSGGLDSTACL. 4 residues coordinate Zn(2+): Cys194, Cys209, Cys212, and Cys215.

Belongs to the QueC family. The cofactor is Zn(2+).

The enzyme catalyses 7-carboxy-7-deazaguanine + NH4(+) + ATP = 7-cyano-7-deazaguanine + ADP + phosphate + H2O + H(+). It functions in the pathway purine metabolism; 7-cyano-7-deazaguanine biosynthesis. Catalyzes the ATP-dependent conversion of 7-carboxy-7-deazaguanine (CDG) to 7-cyano-7-deazaguanine (preQ(0)). The polypeptide is 7-cyano-7-deazaguanine synthase (Pyrococcus horikoshii (strain ATCC 700860 / DSM 12428 / JCM 9974 / NBRC 100139 / OT-3)).